A 716-amino-acid polypeptide reads, in one-letter code: Fatty acid oxidation complex subunit alpha (716 aa).

The enoyl-CoA hydratase/isomerase stretch occupies residues 1 to 189; that stretch reads MIYQSPTIQV…KVGAVDSVVA (189 aa). Residue Asp296 participates in substrate binding. The tract at residues 311–716 is 3-hydroxyacyl-CoA dehydrogenase; the sequence is KEVNNAAVLG…AANNGSYYQA (406 aa). NAD(+) is bound by residues Met324, Asp343, 400–402, Lys407, and Ser429; that span reads VVE. The active-site For 3-hydroxyacyl-CoA dehydrogenase activity is His450. Residue Asn453 coordinates NAD(+). Substrate is bound by residues Asn500 and Tyr660.

In the N-terminal section; belongs to the enoyl-CoA hydratase/isomerase family. The protein in the C-terminal section; belongs to the 3-hydroxyacyl-CoA dehydrogenase family. Heterotetramer of two alpha chains (FadB) and two beta chains (FadA).

The catalysed reaction is a (3S)-3-hydroxyacyl-CoA + NAD(+) = a 3-oxoacyl-CoA + NADH + H(+). It catalyses the reaction a (3S)-3-hydroxyacyl-CoA = a (2E)-enoyl-CoA + H2O. The enzyme catalyses a 4-saturated-(3S)-3-hydroxyacyl-CoA = a (3E)-enoyl-CoA + H2O. It carries out the reaction (3S)-3-hydroxybutanoyl-CoA = (3R)-3-hydroxybutanoyl-CoA. The catalysed reaction is a (3Z)-enoyl-CoA = a 4-saturated (2E)-enoyl-CoA. It catalyses the reaction a (3E)-enoyl-CoA = a 4-saturated (2E)-enoyl-CoA. Its pathway is lipid metabolism; fatty acid beta-oxidation. Involved in the aerobic and anaerobic degradation of long-chain fatty acids via beta-oxidation cycle. Catalyzes the formation of 3-oxoacyl-CoA from enoyl-CoA via L-3-hydroxyacyl-CoA. It can also use D-3-hydroxyacyl-CoA and cis-3-enoyl-CoA as substrate. The sequence is that of Fatty acid oxidation complex subunit alpha from Shewanella baltica (strain OS185).